A 470-amino-acid polypeptide reads, in one-letter code: Cannabinoid receptor 1 (470 aa).

The Extracellular segment spans residues 1–121 (MKSILDGLAD…TPSQQLVIAA (121 aa)). A required for mitochondrial localization region spans residues 2–23 (KSILDGLADTTFRTITTDLLYL). 2 N-linked (GlcNAc...) asparagine glycosylation sites follow: asparagine 78 and asparagine 84. A helical membrane pass occupies residues 122-142 (LSIILGTFTVLENMLVLVVIV). The Cytoplasmic segment spans residues 143-154 (QSRSLRCRPSYH). The helical transmembrane segment at 155-175 (FIGSLAVADLLGSVIFVYSFV) threads the bilayer. Topologically, residues 176 to 187 (DFHVFHRKDSPN) are extracellular. Residues 188 to 208 (VFLFKLGGVTASFTASVGSLF) traverse the membrane as a helical segment. The Cytoplasmic portion of the chain corresponds to 209 to 232 (LTAIDRYISIHRPMSYKRIVTRTK). Residues 233 to 253 (AVIAFCMMWTIAIVIAVLPLF) form a helical membrane-spanning segment. The Extracellular portion of the chain corresponds to 254–277 (GWNCIKLRSVCSDIFPLIDETYLM). A helical transmembrane segment spans residues 278 to 298 (FWIGVTSVLLLFIVYAYMYIL). The Cytoplasmic segment spans residues 299–344 (WKAHNHAVRMLQRGTQKSIIVHTSEDGKVHITRPDQTRMDIRLAKT). Residues 345 to 365 (LVLILVVLIICWGPLMAIMVY) traverse the membrane as a helical segment. At 366–377 (DVFGKINKTIKT) the chain is on the extracellular side. An N-linked (GlcNAc...) asparagine glycan is attached at asparagine 372. The helical transmembrane segment at 378-398 (VFAFCSVLCLLNSTVNPIIYA) threads the bilayer. The Cytoplasmic portion of the chain corresponds to 399–470 (LRSKDLRNAF…VSTDTSAEAV (72 aa)). A lipid anchor (S-palmitoyl cysteine) is attached at cysteine 415.

Belongs to the G-protein coupled receptor 1 family. In terms of processing, palmitoylation at Cys-415 is important for recruitment at both plasma membrane and lipid rafts and association with G protein alpha subunits. Expressed in neurons, especially in the olfactory bulbs, telencephalic pallium, and hypothalamus and also in the midbrain and hindbrain (in the mesencephalic tegmentum and dorsolateral rhombencephalon). Expressed also in the spinal cord.

The protein localises to the cell membrane. It localises to the mitochondrion outer membrane. The protein resides in the cell projection. Its subcellular location is the axon. It is found in the presynapse. G-protein coupled receptor for cannabinoids. Mediates many cannabinoid-induced effects in the central nervous system (CNS), as well as in peripheral tissues. Regulates cellular respiration and energy production in response to cannabinoids. Signaling typically involves reduction in cyclic AMP. The sequence is that of Cannabinoid receptor 1 (cnr1) from Xenopus laevis (African clawed frog).